The chain runs to 778 residues: MKFYIDDLPVLFPYPKIYPEQYNYMCDIKKTLDVGGNSILEMPSGTGKTVSLLSLTIAYQMHYPEHRKIIYCSRTMSEIEKALVELENLMDYRTKELGYQEDFRGLGLTSRKNLCLHPEVSKERKGTVVDEKCRRMTNGQAKRKLEEDPEANVELCEYHENLYNIEVEDYLPKGVFSFEKLLKYCEEKTLCPYFIVRRMISLCNIIIYSYHYLLDPKIAERVSNEVSKDSIVIFDEAHNIDNVCIESLSLDLTTDALRRATRGANALDERISEVRKVDSQKLQDEYEKLVQGLHSADILTDQEEPFVETPVLPQDLLTEAIPGNIRRAEHFVSFLKRLIEYLKTRMKVLHVISETPKSFLQHLKQLTFIERKPLRFCSERLSLLVRTLEVTEVEDFTALKDIATFATLISTYEEGFLLIIEPYEIENAAVPNPIMRFTCLDASIAIKPVFERFSSVIITSGTISPLDMYPRMLNFKTVLQKSYAMTLAKKSFLPMIITKGSDQVAISSRFEIRNDPSIVRNYGSMLVEFAKITPDGMVVFFPSYLYMESIVSMWQTMGILDEVWKHKLILVETPDAQETSLALETYRKACSNGRGAILLSVARGKVSEGIDFDHQYGRTVLMIGIPFQYTESRILKARLEFMRENYRIRENDFLSFDAMRHAAQCLGRVLRGKDDYGVMVLADRRFSRKRSQLPKWIAQGLSDADLNLSTDMAISNTKQFLRTMAQPTDPKDQEGVSVWSYEDLIKHQNSRKDQGGFIENENKEGEQDEDEDEDIEMQ.

One can recognise a Helicase ATP-binding domain in the interval 7 to 285 (DLPVLFPYPK…KVDSQKLQDE (279 aa)). Position 42–49 (42–49 (MPSGTGKT)) interacts with ATP. [4Fe-4S] cluster-binding residues include cysteine 115, cysteine 133, cysteine 156, and cysteine 191. The DEAH box signature appears at 235 to 238 (DEAH). Basic and acidic residues predominate over residues 750 to 765 (SRKDQGGFIENENKEG). Residues 750 to 778 (SRKDQGGFIENENKEGEQDEDEDEDIEMQ) are disordered. A compositionally biased stretch (acidic residues) spans 766-778 (EQDEDEDEDIEMQ).

The protein belongs to the helicase family. RAD3/XPD subfamily. As to quaternary structure, component of the 7-subunit TFIIH core complex composed of XPB/SSL2, XPD/RAD3, SSL1, TFB1, TFB2, TFB4 and TFB5, which is active in NER. The core complex associates with the 3-subunit CTD-kinase module TFIIK composed of CCL1, KIN28 and TFB3 to form the 10-subunit holoenzyme (holo-TFIIH) active in transcription. An additionnal subunit, TFB6, plays a role in the dissociation of the SSL2 helicase from TFIIH after transcription initiation. The cofactor is [4Fe-4S] cluster. Requires Mg(2+) as cofactor.

It is found in the nucleus. The catalysed reaction is Couples ATP hydrolysis with the unwinding of duplex DNA at the replication fork by translocating in the 5'-3' direction. This creates two antiparallel DNA single strands (ssDNA). The leading ssDNA polymer is the template for DNA polymerase III holoenzyme which synthesizes a continuous strand.. The enzyme catalyses ATP + H2O = ADP + phosphate + H(+). ATP-dependent 5'-3' DNA helicase. Component of the general transcription and DNA repair factor IIH (TFIIH) core complex, which is involved in general and transcription-coupled nucleotide excision repair (NER) of damaged DNA and, when complexed to TFIIK, in RNA transcription by RNA polymerase II. In NER, TFIIH acts by opening DNA around the lesion to allow the excision of the damaged oligonucleotide and its replacement by a new DNA fragment. The ATP-dependent helicase activity of XPD/RAD3 is required for DNA opening. In transcription, TFIIH has an essential role in transcription initiation. When the pre-initiation complex (PIC) has been established, TFIIH is required for promoter opening and promoter escape. Phosphorylation of the C-terminal tail (CTD) of the largest subunit of RNA polymerase II by the kinase module TFIIK controls the initiation of transcription. XPD/RAD3 acts by forming a bridge between TFIIK and the core-TFIIH complex. Involved in the maintenance of the fidelity of DNA replication. Has single-stranded DNA-dependent ATPase activity. 5'-3' DNA helicase activity requires ATP (dATP partially substitutes), will unwind over 800 bp dsDNA. Able to unwind an RNA:DNA hybrid. The chain is General transcription and DNA repair factor IIH helicase subunit XPD/RAD3 from Saccharomyces cerevisiae (strain ATCC 204508 / S288c) (Baker's yeast).